The sequence spans 134 residues: Profilin-4 (134 aa).

Cys-13 and Cys-118 are oxidised to a cystine. Positions 84-100 match the Involved in PIP2 interaction motif; sequence AVIRGKKGSGGITIKKT. Thr-114 is modified (phosphothreonine).

The protein belongs to the profilin family. As to quaternary structure, occurs in many kinds of cells as a complex with monomeric actin in a 1:1 ratio. Phosphorylated by MAP kinases.

The protein localises to the cytoplasm. It is found in the cytoskeleton. Binds to actin and affects the structure of the cytoskeleton. At high concentrations, profilin prevents the polymerization of actin, whereas it enhances it at low concentrations. The chain is Profilin-4 from Olea europaea (Common olive).